The chain runs to 245 residues: Type III pantothenate kinase (245 aa).

6–13 (DQGNTILK) contributes to the ATP binding site. Substrate contacts are provided by residues Tyr-86 and 93–96 (GTDR). The active-site Proton acceptor is Asp-95. Asp-116 provides a ligand contact to K(+). Position 119 (Thr-119) interacts with ATP. Residue Thr-171 participates in substrate binding.

The protein belongs to the type III pantothenate kinase family. Homodimer. Requires NH4(+) as cofactor. K(+) serves as cofactor.

It localises to the cytoplasm. The enzyme catalyses (R)-pantothenate + ATP = (R)-4'-phosphopantothenate + ADP + H(+). It participates in cofactor biosynthesis; coenzyme A biosynthesis; CoA from (R)-pantothenate: step 1/5. In terms of biological role, catalyzes the phosphorylation of pantothenate (Pan), the first step in CoA biosynthesis. The protein is Type III pantothenate kinase of Azobacteroides pseudotrichonymphae genomovar. CFP2.